The sequence spans 190 residues: MMIESSSQDVASLVIALRQQQVIAYPTEAVFGLGCNPDSESAVQALLALKQRPWQKGLILVAAHYAQLKEYIDDDALDDAARSRIFASWPGPVTWVIPVCPTTPSWLTGQHASLAVRVSAFEPVRRLCLAFGKPLVSTSANLTGQPPARSADEVRGQLGAAFLVLDEAVEGRLNPTEIRDALSGELIRQG.

The 184-residue stretch at 7 to 190 (SQDVASLVIA…ALSGELIRQG (184 aa)) folds into the YrdC-like domain.

Belongs to the SUA5 family. TsaC subfamily.

The protein resides in the cytoplasm. The enzyme catalyses L-threonine + hydrogencarbonate + ATP = L-threonylcarbamoyladenylate + diphosphate + H2O. Required for the formation of a threonylcarbamoyl group on adenosine at position 37 (t(6)A37) in tRNAs that read codons beginning with adenine. Catalyzes the conversion of L-threonine, HCO(3)(-)/CO(2) and ATP to give threonylcarbamoyl-AMP (TC-AMP) as the acyladenylate intermediate, with the release of diphosphate. In Sodalis glossinidius (strain morsitans), this protein is Threonylcarbamoyl-AMP synthase.